Reading from the N-terminus, the 444-residue chain is Glutamyl-tRNA reductase (444 aa).

Substrate-binding positions include T49 to R52, S109, E114 to Q116, and Q120. C50 functions as the Nucleophile in the catalytic mechanism. G189–S194 serves as a coordination point for NADP(+). The disordered stretch occupies residues K425–G444.

It belongs to the glutamyl-tRNA reductase family. In terms of assembly, homodimer.

It catalyses the reaction (S)-4-amino-5-oxopentanoate + tRNA(Glu) + NADP(+) = L-glutamyl-tRNA(Glu) + NADPH + H(+). Its pathway is porphyrin-containing compound metabolism; protoporphyrin-IX biosynthesis; 5-aminolevulinate from L-glutamyl-tRNA(Glu): step 1/2. Catalyzes the NADPH-dependent reduction of glutamyl-tRNA(Glu) to glutamate 1-semialdehyde (GSA). This chain is Glutamyl-tRNA reductase, found in Pelotomaculum thermopropionicum (strain DSM 13744 / JCM 10971 / SI).